The following is a 188-amino-acid chain: dCTP deaminase (188 aa).

DCTP is bound by residues 111-116 (KSTYAR), 135-137 (TLE), glutamine 156, tyrosine 170, and glutamine 180. The active-site Proton donor/acceptor is the glutamate 137.

It belongs to the dCTP deaminase family. Homotrimer.

The catalysed reaction is dCTP + H2O + H(+) = dUTP + NH4(+). It participates in pyrimidine metabolism; dUMP biosynthesis; dUMP from dCTP (dUTP route): step 1/2. In terms of biological role, catalyzes the deamination of dCTP to dUTP. The sequence is that of dCTP deaminase from Legionella pneumophila (strain Paris).